A 38-amino-acid chain; its full sequence is Photosystem II reaction center protein L (38 aa).

The chain crosses the membrane as a helical span at residues 17-37; sequence SLYFGLLLIFVLAVLFSSYIF.

Belongs to the PsbL family. As to quaternary structure, PSII is composed of 1 copy each of membrane proteins PsbA, PsbB, PsbC, PsbD, PsbE, PsbF, PsbH, PsbI, PsbJ, PsbK, PsbL, PsbM, PsbT, PsbX, PsbY, PsbZ, Psb30/Ycf12, at least 3 peripheral proteins of the oxygen-evolving complex and a large number of cofactors. It forms dimeric complexes.

It localises to the plastid. It is found in the chloroplast thylakoid membrane. In terms of biological role, one of the components of the core complex of photosystem II (PSII). PSII is a light-driven water:plastoquinone oxidoreductase that uses light energy to abstract electrons from H(2)O, generating O(2) and a proton gradient subsequently used for ATP formation. It consists of a core antenna complex that captures photons, and an electron transfer chain that converts photonic excitation into a charge separation. This subunit is found at the monomer-monomer interface and is required for correct PSII assembly and/or dimerization. The chain is Photosystem II reaction center protein L from Chlamydomonas moewusii (Chlamydomonas eugametos).